The primary structure comprises 481 residues: Ribosomal RNA small subunit methyltransferase F (481 aa).

Residues 125 to 131, Glu-149, Asp-176, and Asp-194 each bind S-adenosyl-L-methionine; that span reads AAAPGSK. Cys-247 acts as the Nucleophile in catalysis.

This sequence belongs to the class I-like SAM-binding methyltransferase superfamily. RsmB/NOP family.

The protein resides in the cytoplasm. It catalyses the reaction cytidine(1407) in 16S rRNA + S-adenosyl-L-methionine = 5-methylcytidine(1407) in 16S rRNA + S-adenosyl-L-homocysteine + H(+). Specifically methylates the cytosine at position 1407 (m5C1407) of 16S rRNA. The polypeptide is Ribosomal RNA small subunit methyltransferase F (Psychromonas ingrahamii (strain DSM 17664 / CCUG 51855 / 37)).